The chain runs to 208 residues: Large ribosomal subunit protein uL3 (208 aa).

Gln-149 carries the post-translational modification N5-methylglutamine.

This sequence belongs to the universal ribosomal protein uL3 family. In terms of assembly, part of the 50S ribosomal subunit. Forms a cluster with proteins L14 and L19. In terms of processing, methylated by PrmB.

In terms of biological role, one of the primary rRNA binding proteins, it binds directly near the 3'-end of the 23S rRNA, where it nucleates assembly of the 50S subunit. The protein is Large ribosomal subunit protein uL3 of Glaesserella parasuis serovar 5 (strain SH0165) (Haemophilus parasuis).